Consider the following 794-residue polypeptide: Ent-copalyl diphosphate synthase 2 (794 aa).

A chloroplast-targeting transit peptide spans 1-35 (MSSSSNVTSLPRLTTAGGVFPREMVRVHSSCNILR). Lys238 contributes to the substrate binding site. Mg(2+)-binding residues include Asp369 and Asp371. The DXDD motif signature appears at 369-372 (DVDD). Position 455 (Lys455) interacts with substrate.

The protein belongs to the terpene synthase family. Tpsc subfamily. Requires Mg(2+) as cofactor. Expressed in leaves.

Its subcellular location is the plastid. It is found in the chloroplast. The enzyme catalyses (2E,6E,10E)-geranylgeranyl diphosphate = ent-copalyl diphosphate. Its pathway is secondary metabolite biosynthesis; terpenoid biosynthesis. Its function is as follows. Involved in the biosynthesis of ent-kaurene diterpenoids natural products such as oridonin, miltiradiene, eriocalyxin B and nezukol, known to exhibit antitumor, anti-inflammatory and antibacterial activities. Catalyzes the conversion of (2E,6E,10E)-geranylgeranyl diphosphate (GGPP) to ent-copalyl diphosphate (ent-CPP). In Isodon eriocalyx (Plectranthus eriocalyx), this protein is Ent-copalyl diphosphate synthase 2.